A 104-amino-acid chain; its full sequence is Large ribosomal subunit protein uL24 (104 aa).

Over residues 85-96 (IKRELGAKEKAR) the composition is skewed to basic and acidic residues. Residues 85-104 (IKRELGAKEKARADRRKTAK) form a disordered region.

The protein belongs to the universal ribosomal protein uL24 family. Part of the 50S ribosomal subunit.

In terms of biological role, one of two assembly initiator proteins, it binds directly to the 5'-end of the 23S rRNA, where it nucleates assembly of the 50S subunit. Its function is as follows. One of the proteins that surrounds the polypeptide exit tunnel on the outside of the subunit. The polypeptide is Large ribosomal subunit protein uL24 (Anaeromyxobacter sp. (strain Fw109-5)).